Consider the following 471-residue polypeptide: Ribulose bisphosphate carboxylase large chain 2 (471 aa).

2 residues coordinate substrate: asparagine 116 and threonine 166. Residue lysine 168 is the Proton acceptor of the active site. Lysine 170 provides a ligand contact to substrate. Mg(2+) is bound by residues lysine 194, aspartate 196, and glutamate 197. Lysine 194 bears the N6-carboxylysine mark. Catalysis depends on histidine 287, which acts as the Proton acceptor. Residues arginine 288, histidine 320, and serine 372 each coordinate substrate.

It belongs to the RuBisCO large chain family. Type I subfamily. Heterohexadecamer of 8 large chains and 8 small chains. Forms a CsoS2-CsoS1-RuBisCO complex. Requires Mg(2+) as cofactor.

The protein localises to the carboxysome. It catalyses the reaction 2 (2R)-3-phosphoglycerate + 2 H(+) = D-ribulose 1,5-bisphosphate + CO2 + H2O. It carries out the reaction D-ribulose 1,5-bisphosphate + O2 = 2-phosphoglycolate + (2R)-3-phosphoglycerate + 2 H(+). Functionally, ruBisCO catalyzes two reactions: the carboxylation of D-ribulose 1,5-bisphosphate, the primary event in carbon dioxide fixation, as well as the oxidative fragmentation of the pentose substrate. Both reactions occur simultaneously and in competition at the same active site. Replacing the endogenous type I ccbLS genes in H.neapolitanus with this carboxysomally targeted enzyme reconstitutes RuBisCO with about 25% of normal activity; the active enzyme is targeted to carboxysomes. The sequence is that of Ribulose bisphosphate carboxylase large chain 2 from Hydrogenovibrio crunogenus (strain DSM 25203 / XCL-2) (Thiomicrospira crunogena).